Here is a 382-residue protein sequence, read N- to C-terminus: Cell division protein FtsZ (382 aa).

GTP-binding positions include 21–25 (GGGSN), 108–110 (GTG), Glu139, Arg143, and Asp187. A disordered region spans residues 322–382 (RAQQQSNFNR…FLRNRRRKSR (61 aa)). Residues 340-352 (KSKEKEAEKKEPR) show a composition bias toward basic and acidic residues.

This sequence belongs to the FtsZ family. As to quaternary structure, homodimer. Polymerizes to form a dynamic ring structure in a strictly GTP-dependent manner. Interacts directly with several other division proteins.

Its subcellular location is the cytoplasm. In terms of biological role, essential cell division protein that forms a contractile ring structure (Z ring) at the future cell division site. The regulation of the ring assembly controls the timing and the location of cell division. One of the functions of the FtsZ ring is to recruit other cell division proteins to the septum to produce a new cell wall between the dividing cells. Binds GTP and shows GTPase activity. The sequence is that of Cell division protein FtsZ from Halalkalibacterium halodurans (strain ATCC BAA-125 / DSM 18197 / FERM 7344 / JCM 9153 / C-125) (Bacillus halodurans).